The following is a 227-amino-acid chain: ATP-dependent dethiobiotin synthetase BioD (227 aa).

Aspartate 13–tyrosine 18 provides a ligand contact to ATP. Threonine 17 is a Mg(2+) binding site. Residue lysine 38 is part of the active site. Residue serine 42 coordinates substrate. ATP is bound by residues aspartate 55, glutamate 116 to glycine 119, and asparagine 179 to asparagine 180. Residues aspartate 55 and glutamate 116 each coordinate Mg(2+).

The protein belongs to the dethiobiotin synthetase family. Homodimer. The cofactor is Mg(2+).

The protein resides in the cytoplasm. The enzyme catalyses (7R,8S)-7,8-diammoniononanoate + CO2 + ATP = (4R,5S)-dethiobiotin + ADP + phosphate + 3 H(+). Its pathway is cofactor biosynthesis; biotin biosynthesis; biotin from 7,8-diaminononanoate: step 1/2. Catalyzes a mechanistically unusual reaction, the ATP-dependent insertion of CO2 between the N7 and N8 nitrogen atoms of 7,8-diaminopelargonic acid (DAPA, also called 7,8-diammoniononanoate) to form a ureido ring. This is ATP-dependent dethiobiotin synthetase BioD from Clostridium botulinum (strain Alaska E43 / Type E3).